The following is a 269-amino-acid chain: MTNNVRGYLQLHPFHLVGPSPWPIFTSFSLMDLAFSIALNSHGYMANNFYIILSIITVLYSMTLWFKDIIAESTYLGDHTIAVKRGLNQGFLLFVVSEILIFASLFWAYLHSAVNPTMDLGMSWPPVGIDVISPAELPLLNTIILLASGVTITYAHHALINGNRANTLYGFIYSTLLIALFVMFQFLEYKYAGFTITDGVYGSTFYSLTGLHGLHMIMLTIMLVICTWRVYNYDFTNTSHVGAETTILYLHVLDVIWLFIYIIVYWWGS.

7 helical membrane passes run 7–29 (GYLQLHPFHLVGPSPWPIFTSFS), 51–71 (IILSIITVLYSMTLWFKDIIA), 90–110 (GFLLFVVSEILIFASLFWAYL), 127–147 (VGIDVISPAELPLLNTIILLA), 167–187 (TLYGFIYSTLLIALFVMFQFL), 205–225 (FYSLTGLHGLHMIMLTIMLVI), and 247–267 (ILYLHVLDVIWLFIYIIVYWW).

Belongs to the cytochrome c oxidase subunit 3 family. Component of the cytochrome c oxidase (complex IV, CIV), a multisubunit enzyme composed of a catalytic core of 3 subunits and several supernumerary subunits. The complex exists as a monomer or a dimer and forms supercomplexes (SCs) in the inner mitochondrial membrane with ubiquinol-cytochrome c oxidoreductase (cytochrome b-c1 complex, complex III, CIII).

It is found in the mitochondrion inner membrane. It carries out the reaction 4 Fe(II)-[cytochrome c] + O2 + 8 H(+)(in) = 4 Fe(III)-[cytochrome c] + 2 H2O + 4 H(+)(out). Its function is as follows. Component of the cytochrome c oxidase, the last enzyme in the mitochondrial electron transport chain which drives oxidative phosphorylation. The respiratory chain contains 3 multisubunit complexes succinate dehydrogenase (complex II, CII), ubiquinol-cytochrome c oxidoreductase (cytochrome b-c1 complex, complex III, CIII) and cytochrome c oxidase (complex IV, CIV), that cooperate to transfer electrons derived from NADH and succinate to molecular oxygen, creating an electrochemical gradient over the inner membrane that drives transmembrane transport and the ATP synthase. Cytochrome c oxidase is the component of the respiratory chain that catalyzes the reduction of oxygen to water. Electrons originating from reduced cytochrome c in the intermembrane space (IMS) are transferred via the dinuclear copper A center (CU(A)) of subunit 2 and heme A of subunit 1 to the active site in subunit 1, a binuclear center (BNC) formed by heme A3 and copper B (CU(B)). The BNC reduces molecular oxygen to 2 water molecules using 4 electrons from cytochrome c in the IMS and 4 protons from the mitochondrial matrix. The protein is Cytochrome c oxidase subunit 3 (COX3) of Candida parapsilosis (Yeast).